A 188-amino-acid chain; its full sequence is ADP-ribosylation factor J (188 aa).

GTP contacts are provided by residues 34–40 (DGAGKST), 75–79 (DVGGQ), and 134–137 (NKQD).

This sequence belongs to the small GTPase superfamily. Arf family.

It localises to the golgi apparatus. GTP-binding protein that may be involved in protein trafficking. May modulate vesicle budding and uncoating within the Golgi apparatus. The sequence is that of ADP-ribosylation factor J (arrJ) from Dictyostelium discoideum (Social amoeba).